A 255-amino-acid polypeptide reads, in one-letter code: Type III pantothenate kinase (255 aa).

Residue 12–19 (DIGNSYTK) participates in ATP binding. 109–112 (GDDL) provides a ligand contact to substrate. Catalysis depends on aspartate 111, which acts as the Proton acceptor. Threonine 133 is an ATP binding site. Threonine 185 contacts substrate.

It belongs to the type III pantothenate kinase family. As to quaternary structure, homodimer. NH4(+) serves as cofactor. K(+) is required as a cofactor.

Its subcellular location is the cytoplasm. The enzyme catalyses (R)-pantothenate + ATP = (R)-4'-phosphopantothenate + ADP + H(+). It participates in cofactor biosynthesis; coenzyme A biosynthesis; CoA from (R)-pantothenate: step 1/5. In terms of biological role, catalyzes the phosphorylation of pantothenate (Pan), the first step in CoA biosynthesis. The protein is Type III pantothenate kinase of Malacoplasma penetrans (strain HF-2) (Mycoplasma penetrans).